A 120-amino-acid chain; its full sequence is Large ribosomal subunit protein uL18 (120 aa).

This sequence belongs to the universal ribosomal protein uL18 family. As to quaternary structure, part of the 50S ribosomal subunit; part of the 5S rRNA/L5/L18/L25 subcomplex. Contacts the 5S and 23S rRNAs.

Functionally, this is one of the proteins that bind and probably mediate the attachment of the 5S RNA into the large ribosomal subunit, where it forms part of the central protuberance. This chain is Large ribosomal subunit protein uL18, found in Chloroflexus aurantiacus (strain ATCC 29364 / DSM 637 / Y-400-fl).